A 251-amino-acid chain; its full sequence is NADPH-dependent oxidoreductase (251 aa).

Belongs to the flavin oxidoreductase frp family. It depends on FMN as a cofactor.

Reduces FMN, organic nitro compounds and disulfide DTNB. Involved in maintenance of the cellular redox state and the disulfide stress response. This is NADPH-dependent oxidoreductase (nfrA) from Staphylococcus saprophyticus subsp. saprophyticus (strain ATCC 15305 / DSM 20229 / NCIMB 8711 / NCTC 7292 / S-41).